The following is a 395-amino-acid chain: Neuromedin-U receptor 2 (395 aa).

The Extracellular segment spans residues 1–41 (MGKLENASWIHDPLMKYLNSTEEYLAHLCGPKRSDLSLPVS). N-linked (GlcNAc...) asparagine glycans are attached at residues asparagine 6 and asparagine 19. Residues 42–62 (VAYALIFLVGVMGNLLVCMVI) form a helical membrane-spanning segment. Residues 63 to 74 (VRHQTLKTPTNY) are Cytoplasmic-facing. A helical membrane pass occupies residues 75–95 (YLFSLAVSDLLVLLLGMPLEI). The Extracellular segment spans residues 96-115 (YEMWHNYPFLFGPVGCYFKT). A disulfide bridge connects residues cysteine 111 and cysteine 196. Residues 116 to 138 (ALFETVCFASILSVTTVSVERYV) form a helical membrane-spanning segment. Over 139-157 (AIVHPFRAKLESTRRRALR) the chain is Cytoplasmic. Residues 158–178 (ILSLVWSFSVVFSLPNTSIHG) form a helical membrane-spanning segment. The Extracellular segment spans residues 179–212 (IKFQHFPNGSSVPGSATCTVTKPMWVYNLIIQAT). N-linked (GlcNAc...) asparagine glycosylation is present at asparagine 186. Residues 213 to 233 (SFLFYILPMTLISVLYYLMGL) form a helical membrane-spanning segment. Residues 234–257 (RLKRDESLEANKVAVNIHRPSRKS) are Cytoplasmic-facing. Residues 258–278 (VTKMLFVLVLVFAICWTPFHV) traverse the membrane as a helical segment. The Extracellular portion of the chain corresponds to 279-293 (DRLFFSFVEEWTESL). The helical transmembrane segment at 294–314 (AAVFNLIHVVSGVFFYLSSAV) threads the bilayer. Over 315 to 395 (NPIIYNLLSR…TTAPCAGEVP (81 aa)) the chain is Cytoplasmic. Residues 374-395 (FPGQSSIHNTNLTTAPCAGEVP) are disordered. The segment covering 375 to 387 (PGQSSIHNTNLTT) has biased composition (polar residues).

The protein belongs to the G-protein coupled receptor 1 family. As to expression, the highest level is detected in the uterus. In the central nervous system, high expression levels were found in the hypothalamus and moderate levels in both the medulla oblongata and spinal cord. Expressed in the hypothalamic paraventricular nucleus (PVN) and suprachiasmatic nuclei (SCN) of the hypothalamus. Expression is low in the gastrointestinal tract. In other peripheral tissues, moderate expression was observed in the lung and ovary.

It localises to the cell membrane. Functionally, receptor for the neuromedin-U and neuromedin-S neuropeptides. The protein is Neuromedin-U receptor 2 (Nmur2) of Rattus norvegicus (Rat).